Here is a 263-residue protein sequence, read N- to C-terminus: MDTLTSAPLLTSKFKPSFSPQQKPCFPHRRRFENGKKKQSIVPVARLFGPAIFEASKLKVLFLGIDENKHPGNLPRTYTLTHSDVTSKLTLAISQTINNSQLQGWYNRLQRDEVVAQWKKVKGKMSLHVHCHISGGHFLLDIFARLRYFIFCKELPVVLKAFVHGDGNLFNNYPELEESLVWVFFHSKILIREFNKVECWGPLKEASQPTSGTHSDLKLPQSCEEDCECCFPPLNLSPIPCSNEVINNTYEPIDGIGTQHGNL.

Residues 1–54 constitute a chloroplast transit peptide; sequence MDTLTSAPLLTSKFKPSFSPQQKPCFPHRRRFENGKKKQSIVPVARLFGPAIFE.

Belongs to the staygreen family.

The protein resides in the plastid. It localises to the chloroplast. Its function is as follows. Non-functional protein probably interfering with the disassembling mechanism of the intact light-harvesting complex of photosystem II (LHCII) in the thylakoid membranes. Responsible for a stay-green phenotype. The sequence is that of Non-functional protein STAY-GREEN, chloroplastic (SGR) from Pisum sativum (Garden pea).